The chain runs to 2344 residues: Pecanex-like protein 1 (2344 aa).

Helical transmembrane passes span 33 to 53 (ALHL…YMAL) and 57 to 77 (MIIV…LKMV). Disordered stretches follow at residues 101–163 (QRAK…GSSR), 271–290 (SHSY…SSSA), 306–692 (QQQR…TRAR), and 749–837 (VTRS…VQSR). A compositionally biased stretch (polar residues) spans 143 to 163 (SSRNSYAGLDPSNQIGSGSSR). A compositionally biased stretch (basic residues) spans 272-282 (HSYRKEHRPRG). Residues 328–343 (RESSAGKSCPPAQSQP) are compositionally biased toward polar residues. The span at 372–390 (SLRSLSTRSSGSTESYCSG) shows a compositional bias: low complexity. The span at 396 to 406 (NSTLSSYKSEQ) shows a compositional bias: polar residues. 3 stretches are compositionally biased toward basic and acidic residues: residues 416–458 (LSEH…DKTA), 508–522 (RPPE…EQSE), and 531–547 (RVCK…DVRP). The segment covering 557–572 (TSAHKPGRRRTGKKRA) has biased composition (basic residues). Over residues 616–638 (SIHSAHQFSSDSSSSATSHSCQS) the composition is skewed to low complexity. Residues 749–758 (VTRSRNSLPS) show a composition bias toward polar residues. Composition is skewed to low complexity over residues 770-781 (AATGAAQASEEA) and 817-835 (LSLQ…VKVQ). 3 helical membrane passes run 1010–1030 (ILAV…LIQG), 1035–1055 (IWVF…LKSV), and 1069–1089 (IIAY…WLLD). N-linked (GlcNAc...) asparagine glycosylation occurs at Asn-1094. A helical membrane pass occupies residues 1119 to 1139 (LVIVFTLCFPIVFFIGLLPQV). N-linked (GlcNAc...) asparagine glycosylation is present at Asn-1158. 4 consecutive transmembrane segments (helical) span residues 1163–1183 (LLAA…LYGL), 1196–1216 (HVPV…YHLS), 1269–1289 (LVVC…TVFT), and 1297–1317 (YVLY…LPQV). Asn-1582, Asn-1723, Asn-1985, and Asn-2075 each carry an N-linked (GlcNAc...) asparagine glycan. The interval 2051-2123 (EDSDTGGGTS…SSLVRQSPAR (73 aa)) is disordered. Polar residues-rich tracts occupy residues 2061-2081 (CPGN…QGST) and 2095-2118 (PTTS…SLVR). Residues Asn-2231, Asn-2237, and Asn-2263 are each glycosylated (N-linked (GlcNAc...) asparagine).

This sequence belongs to the pecanex family.

It localises to the membrane. The polypeptide is Pecanex-like protein 1 (Mus musculus (Mouse)).